Consider the following 225-residue polypeptide: Uracil-DNA glycosylase (225 aa).

Asp-65 serves as the catalytic Proton acceptor.

It belongs to the uracil-DNA glycosylase (UDG) superfamily. UNG family.

The protein localises to the cytoplasm. The enzyme catalyses Hydrolyzes single-stranded DNA or mismatched double-stranded DNA and polynucleotides, releasing free uracil.. Excises uracil residues from the DNA which can arise as a result of misincorporation of dUMP residues by DNA polymerase or due to deamination of cytosine. This Bacillus cereus (strain ZK / E33L) protein is Uracil-DNA glycosylase.